Reading from the N-terminus, the 565-residue chain is NAD-dependent malic enzyme (565 aa).

The Proton donor role is filled by Tyr-104. Residue Arg-157 coordinates NAD(+). Lys-175 acts as the Proton acceptor in catalysis. Glu-246, Asp-247, and Asp-270 together coordinate a divalent metal cation. The NAD(+) site is built by Asp-270 and Asn-418.

The protein belongs to the malic enzymes family. As to quaternary structure, homotetramer. The cofactor is Mg(2+). Requires Mn(2+) as cofactor.

It catalyses the reaction (S)-malate + NAD(+) = pyruvate + CO2 + NADH. The enzyme catalyses oxaloacetate + H(+) = pyruvate + CO2. The sequence is that of NAD-dependent malic enzyme from Escherichia coli (strain SMS-3-5 / SECEC).